A 150-amino-acid chain; its full sequence is Ribonuclease HI (150 aa).

Positions 1–141 (MKLINAYTDG…VDVLARGQAM (141 aa)) constitute an RNase H type-1 domain. Positions 9, 47, 69, and 133 each coordinate Mg(2+).

The protein belongs to the RNase H family. As to quaternary structure, monomer. Mg(2+) is required as a cofactor.

It is found in the cytoplasm. The catalysed reaction is Endonucleolytic cleavage to 5'-phosphomonoester.. In terms of biological role, endonuclease that specifically degrades the RNA of RNA-DNA hybrids. In Xylella fastidiosa (strain Temecula1 / ATCC 700964), this protein is Ribonuclease HI.